Reading from the N-terminus, the 132-residue chain is UPF0299 membrane protein YohJ (132 aa).

The next 4 helical transmembrane spans lie at 7–27 (IIWQ…AGIF), 31–51 (LLPV…VLLA), 63–83 (GCYV…VGVM), and 93–113 (FGPV…VVSW).

This sequence belongs to the UPF0299 family.

It localises to the cell inner membrane. In Shigella boydii serotype 4 (strain Sb227), this protein is UPF0299 membrane protein YohJ.